The chain runs to 125 residues: Fluoride-specific ion channel FluC (125 aa).

4 helical membrane passes run 5 to 25 (FVFIALAGALGTLARYSLAGF), 33 to 53 (FFPFGTLVVNITGCFAAGFLW), 69 to 89 (FVLVGFMGAFTTFSAFILETG), and 101 to 121 (IVNLLLQNSLGFGALMAGIVL). Residues glycine 76 and threonine 79 each contribute to the Na(+) site.

The protein belongs to the fluoride channel Fluc/FEX (TC 1.A.43) family.

It localises to the cell inner membrane. The enzyme catalyses fluoride(in) = fluoride(out). Na(+) is not transported, but it plays an essential structural role and its presence is essential for fluoride channel function. Fluoride-specific ion channel. Important for reducing fluoride concentration in the cell, thus reducing its toxicity. The sequence is that of Fluoride-specific ion channel FluC from Desulforapulum autotrophicum (strain ATCC 43914 / DSM 3382 / VKM B-1955 / HRM2) (Desulfobacterium autotrophicum).